Reading from the N-terminus, the 220-residue chain is Large ribosomal subunit protein uL3 (220 aa).

Belongs to the universal ribosomal protein uL3 family. As to quaternary structure, part of the 50S ribosomal subunit. Forms a cluster with proteins L14 and L19.

In terms of biological role, one of the primary rRNA binding proteins, it binds directly near the 3'-end of the 23S rRNA, where it nucleates assembly of the 50S subunit. This is Large ribosomal subunit protein uL3 from Staphylococcus carnosus (strain TM300).